Consider the following 258-residue polypeptide: tRNA pseudouridine synthase A (258 aa).

Aspartate 53 (nucleophile) is an active-site residue. Tyrosine 111 serves as a coordination point for substrate.

It belongs to the tRNA pseudouridine synthase TruA family. As to quaternary structure, homodimer.

It carries out the reaction uridine(38/39/40) in tRNA = pseudouridine(38/39/40) in tRNA. Formation of pseudouridine at positions 38, 39 and 40 in the anticodon stem and loop of transfer RNAs. The chain is tRNA pseudouridine synthase A from Streptococcus agalactiae serotype V (strain ATCC BAA-611 / 2603 V/R).